A 352-amino-acid polypeptide reads, in one-letter code: C-C chemokine receptor type 5 (352 aa).

At 1–30 the chain is on the extracellular side; that stretch reads MDYQVSSPTYDIDYYTSEPCQKINVKQIAG. Sulfotyrosine is present on Tyr3. 2 O-linked (GalNAc...) serine glycosylation sites follow: Ser6 and Ser7. Tyr10, Tyr14, and Tyr15 each carry sulfotyrosine. 2 cysteine pairs are disulfide-bonded: Cys20–Cys269 and Cys101–Cys178. Residues 31–58 traverse the membrane as a helical segment; the sequence is RLLPPLYSLVFIFGFVGNILVVLILINC. Over 59–68 the chain is Cytoplasmic; the sequence is KRLKSMTDIY. A helical transmembrane segment spans residues 69-89; that stretch reads LLNLAISDLLFLLTVPFWAHY. Topologically, residues 90–102 are extracellular; the sequence is AAAQWDFGNTMCQ. The chain crosses the membrane as a helical span at residues 103 to 124; it reads LLTGLYFIGFFSGIFFIILLTI. Over 125–141 the chain is Cytoplasmic; it reads DRYLAIVHAVFALKART. Residues 142–166 traverse the membrane as a helical segment; sequence VTFGVVTSVITWVVAVFASLPGIIF. The Extracellular portion of the chain corresponds to 167 to 198; that stretch reads TRSQREGLHYTCSSHFPYSQYQFWKNFQTLKI. The helical transmembrane segment at 199-218 threads the bilayer; that stretch reads VILGLVLPLLVMVICYSGIL. Over 219-235 the chain is Cytoplasmic; that stretch reads KTLLRCRNEKKRHRAVR. A helical membrane pass occupies residues 236–260; it reads LIFTIMIVYFLFWAPYNIVLLLNTF. Topologically, residues 261–277 are extracellular; it reads QEFFGLNNCSSSNRLDQ. Residues 278–301 traverse the membrane as a helical segment; the sequence is AMQVTETLGMTHCCINPIIYAFVG. Residues 302-352 are Cytoplasmic-facing; it reads EKFRNYLLVFFQKHIAKRFCKCCSIFQQEAPERASSVYTRSTGEQEISVGL. Residues Cys321, Cys323, and Cys324 are each lipidated (S-palmitoyl cysteine). Ser336, Ser337, Ser342, and Ser349 each carry phosphoserine; by BARK1.

It belongs to the G-protein coupled receptor 1 family. As to quaternary structure, interacts with PRAF2. Efficient ligand binding to CCL3/MIP-1alpha and CCL4/MIP-1beta requires sulfation, O-glycosylation and sialic acid modifications. Glycosylation on Ser-6 is required for efficient binding of CCL4. Interacts with GRK2. Interacts with ARRB1 and ARRB2. Interacts with CNIH4. Interacts with S100A4; this interaction stimulates T-lymphocyte chemotaxis. Post-translationally, sulfated on at least 2 of the N-terminal tyrosines. Sulfation is required for efficient binding of the chemokines, CCL3 and CCL4. Palmitoylation in the C-terminal is important for cell surface expression. In terms of processing, phosphorylation on serine residues in the C-terminal is stimulated by binding CC chemokines especially by APO-RANTES. Post-translationally, O-glycosylated, but not N-glycosylated. Ser-6 appears to be the major site even if Ser-7 may be also O-glycosylated. Also sialylated glycans present which contribute to chemokine binding. Thr-16 and Ser-17 may also be glycosylated and, if so, with small moieties such as a T-antigen.

The protein localises to the cell membrane. Its function is as follows. Receptor for a number of inflammatory CC-chemokines including CCL3/MIP-1-alpha, CCL4/MIP-1-beta and RANTES and subsequently transduces a signal by increasing the intracellular calcium ion level. May play a role in the control of granulocytic lineage proliferation or differentiation. Participates in T-lymphocyte migration to the infection site by acting as a chemotactic receptor. This chain is C-C chemokine receptor type 5 (CCR5), found in Theropithecus gelada (Gelada baboon).